Reading from the N-terminus, the 440-residue chain is MYSSSVVSNPNERLVNNRVENDLESSDDTLSTQAKPVSRLLTRKLLLGVVVLFFLAGVSVVSYFLFSKYKMLNKFKRELDDHLTKDFPNLERSKRDTCFDELTRLFGDGFLSDDPKLEYEVYREFEEFNSKYNRRHATQQERLNRLVTFRSNYLEVKEQKGDEPYVKGINRFSDLTEREFYKLFPVMKPPKATYSNGYYLLSHMANKTYLKNLKKALNTDEDVDLAKLTGENLDWRRSSSVTSVKDQSNCGGCWAFSTVGSVEGYYMSHFDKSYELSVQELLDCDSFSNGCQGGLLESAYEYVRKYGLVSAKDLPFVDKARRCSVPKAKKVSVPSYHVFKGKEVMTRSLTSSPCSVYLSVSPELAKYKSGVFTGECGKSLNHAVVLVGEGYDEVTKKRYWVVQNSWGTDWGENGYMRLERTNMGTDKCGVLDTSMSAFEL.

A signal peptide spans 1–60; that stretch reads MYSSSVVSNPNERLVNNRVENDLESSDDTLSTQAKPVSRLLTRKLLLGVVVLFFLAGVSV. Positions 61–229 are cleaved as a propeptide — activation peptide; sequence VSYFLFSKYK…DEDVDLAKLT (169 aa). The interval 166–182 is involved in processing to yield active enzymes; that stretch reads VKGINRFSDLTEREFYK. N206 carries an N-linked (GlcNAc...) asparagine glycan. An intrachain disulfide couples C250 to C291. Active-site residues include C253, H382, and N404.

The protein belongs to the peptidase C1 family.

The chain is Cysteine proteinase from Theileria parva (East coast fever infection agent).